The primary structure comprises 395 residues: MKVVIVGAGMGGMSAAIALRQIGIDTVVYERVTENKPVGAAISVWSNGVKCLNYLGLQEETAELGGKVETMSYVDGHTGDTMCRFSMHPLIEQVGQRPYPIARAELQLMLMKAYGIDDINFGMKMVGVENDTAGSAAKATFADGTTVSADVIIGADGAGSITREYVLGGPVSRRYAGYVNYNGLVSTDDAIGPATEWTTYVGDGKRVSVMPVSDDRFYFFFDVVEPQGSPYEEGRVREVLRAHFAGWTPGVQTLIDTLDPLATNRVEILDLDPFHTWVKGRVAVLGDAAHNTTPDIGQGGCSAMEDAIALQWAFKDHPDDVHAALAAYQSARTERAADLVLRARKRCDVTHAKDPQVTSRWYDELRNEDGTNIIRGIVGNIVGGPLTPVTAATEG.

FAD is bound by residues G11, 30–31 (ER), S43, and M125. Residues N180, R206, and 218 to 220 (YFF) each bind substrate. Residues D287 and 297–301 (GQGGC) contribute to the FAD site.

The protein belongs to the FAD-dependent urate hydroxylase family. Monomer. The cofactor is FAD.

It carries out the reaction urate + NADH + O2 + H(+) = 5-hydroxyisourate + NAD(+) + H2O. Its pathway is purine metabolism; urate degradation. In terms of biological role, catalyzes the hydroxylation of urate to 5-hydroxyisourate (HIU). Is likely to be involved in the urate degradation pathway to allantoin. Prefers NADH over NADPH as the electron donor. This chain is FAD-dependent urate hydroxylase, found in Mycolicibacterium vanbaalenii (strain DSM 7251 / JCM 13017 / BCRC 16820 / KCTC 9966 / NRRL B-24157 / PYR-1) (Mycobacterium vanbaalenii).